A 470-amino-acid chain; its full sequence is uncharacterized protein (470 aa).

A disordered region spans residues 439 to 470; the sequence is SIKSSKSKKQLKSSKSKKPIKHTKTKNIYVET. Residues 443–463 are compositionally biased toward basic residues; it reads SKSKKQLKSSKSKKPIKHTKT.

This is an uncharacterized protein from Acanthamoeba polyphaga mimivirus (APMV).